The sequence spans 214 residues: Large ribosomal subunit protein uL3 (214 aa).

The residue at position 155 (Gln-155) is an N5-methylglutamine.

Belongs to the universal ribosomal protein uL3 family. Part of the 50S ribosomal subunit. Forms a cluster with proteins L14 and L19. In terms of processing, methylated by PrmB.

One of the primary rRNA binding proteins, it binds directly near the 3'-end of the 23S rRNA, where it nucleates assembly of the 50S subunit. This Acinetobacter baumannii (strain ACICU) protein is Large ribosomal subunit protein uL3.